The chain runs to 473 residues: Fumarate hydratase class II (473 aa).

Substrate-binding positions include S105–T107, H130–D133, S140–N142, and T188. Residue H189 is the Proton donor/acceptor of the active site. S319 is an active-site residue. Residues S320 and K325–N327 contribute to the substrate site.

This sequence belongs to the class-II fumarase/aspartase family. Fumarase subfamily. Homotetramer.

It localises to the cytoplasm. It catalyses the reaction (S)-malate = fumarate + H2O. It participates in carbohydrate metabolism; tricarboxylic acid cycle; (S)-malate from fumarate: step 1/1. Functionally, involved in the TCA cycle. Catalyzes the stereospecific interconversion of fumarate to L-malate. In Xylella fastidiosa (strain 9a5c), this protein is Fumarate hydratase class II.